The chain runs to 64 residues: Large ribosomal subunit protein bL35 (64 aa).

Positions 1–42 (MPKAKTHSGASKRFRRTGTGKIVRQKANRRHLLEHKSSKRTR) are enriched in basic residues. The segment at 1 to 64 (MPKAKTHSGA…TKRVKSLLNG (64 aa)) is disordered.

It belongs to the bacterial ribosomal protein bL35 family.

The chain is Large ribosomal subunit protein bL35 from Mycobacterium ulcerans (strain Agy99).